We begin with the raw amino-acid sequence, 783 residues long: ATP-dependent DNA helicase Hel308 (783 aa).

ATP-binding positions include Gln-29 and 47–54 (VPTASGKT). Residues 34–209 (ERGVTEGANL…WLDAELVDSD (176 aa)) enclose the Helicase ATP-binding domain. The short motif at 154–157 (DEVH) is the DEAH box element. Residues 242 to 443 (QTAAVVADTL…EPALRTHVLA (202 aa)) form the Helicase C-terminal domain. The segment at 744-783 (ETVGHPDPGMDGVAADTDAAPESGGEAGGDEGQASLGDFS) is disordered.

The protein belongs to the helicase family. Hel308 subfamily. As to quaternary structure, monomer.

The catalysed reaction is Couples ATP hydrolysis with the unwinding of duplex DNA by translocating in the 3'-5' direction.. The enzyme catalyses ATP + H2O = ADP + phosphate + H(+). In terms of biological role, DNA-dependent ATPase and 3'-5' DNA helicase that may be involved in repair of stalled replication forks. This Halobacterium salinarum (strain ATCC 700922 / JCM 11081 / NRC-1) (Halobacterium halobium) protein is ATP-dependent DNA helicase Hel308.